The chain runs to 741 residues: MQHSPSTTTDHIHFAARFFDRNSYTMDRRLRRPRRTEDVSSGPLLAQSKQPSLLPVTRRTGSVTAAGATATATATAGPATRTRASPSRNKVVAPPSPDLGPRTRRSSRPRSSVGPLTGSGSGSSLPIKAAIKARTPIPEVSEVSSPIRLSTSNLPMTLTTNTSSGAPNKAFNTSSVNSGNSFSRTTTSSTTTTTERIEIRAEGDGEVDTDSIRKRITERLRRSVSKTISNLAGTPVTNTEEGSRYSRSVSRSVYDDEKSSKRSYSTGEEDIDEEDELEEDQFRSFNVTRKSATPAEISCRQLKAPREFGGWLGAFLFLLLLPTAVYYLTWSCTARNACQFKHLNLGILLDVNYLTRQVFQPRVVGAFAAYQVVVFLLVALLPGRRVHLTRETYKFNCLAVSLTLLIASGVAEYLKYPVVTFVLRHYLRFCIFGLVGAFVAAAWSYWLVDTAKYNVLRQTLTNDYGRTGSFVVDFALGRQLNPKWLGRVDWKQFQYRLSLVTTLIYATCYIYQTLVWPQKPQLGEQEGYLYQAKYYWNNVNYDPATLFSASCLLFYVLDAIIFEHHLSSSFELQHEGYGCLLLLRYAATPYLLTAVTKYFYEQRVPISCWYAPLAVAALLSLGLLVKRFSCAYKYKYRLNSQSPIFANIETIHTYQGSRLLLSGMWGWVRQPNYLGDIVALLALAAPMALRPAWPPVLGLSLIILLLLHRATRANARNQARYHSSWQRYSTQVRSYILPRVY.

Positions 29-126 are disordered; the sequence is RLRRPRRTED…TGSGSGSSLP (98 aa). 2 stretches are compositionally biased toward low complexity: residues 57–84 and 109–126; these read TRRT…RTRA and PRSS…SSLP. Residue serine 111 is modified to Phosphoserine. Threonine 135 carries the phosphothreonine modification. Serine 144 carries the post-translational modification Phosphoserine. Residues 160-184 are compositionally biased toward polar residues; that stretch reads TNTSSGAPNKAFNTSSVNSGNSFSR. The segment at 160–194 is disordered; the sequence is TNTSSGAPNKAFNTSSVNSGNSFSRTTTSSTTTTT. Over residues 185-194 the composition is skewed to low complexity; that stretch reads TTTSSTTTTT. Phosphoserine is present on residues serine 223 and serine 225. Over residues 231–240 the composition is skewed to polar residues; that stretch reads LAGTPVTNTE. Residues 231-277 are disordered; sequence LAGTPVTNTEEGSRYSRSVSRSVYDDEKSSKRSYSTGEEDIDEEDEL. Residues threonine 234 and threonine 237 each carry the phosphothreonine modification. Phosphoserine occurs at positions 243, 246, 248, 250, and 263. A Phosphothreonine modification is found at threonine 266. Positions 267 to 277 are enriched in acidic residues; the sequence is GEEDIDEEDEL. Residue serine 284 is modified to Phosphoserine. The residue at position 288 (threonine 288) is a Phosphothreonine. Residue serine 291 is modified to Phosphoserine. Threonine 293 carries the phosphothreonine modification. Serine 298 is modified (phosphoserine). The next 8 membrane-spanning stretches (helical) occupy residues 308–328, 363–383, 402–422, 429–449, 497–517, 543–563, 577–599, and 604–624; these read FGGW…VYYL, VVGA…LLPG, LTLL…VTFV, FCIF…WLVD, LSLV…LVWP, PATL…IIFE, YGCL…TKYF, and VPIS…LGLL. Serine 640 and serine 642 each carry phosphoserine. Residues 687–707 traverse the membrane as a helical segment; that stretch reads MALRPAWPPVLGLSLIILLLL.

It belongs to the ERG4/ERG24 family. Interacts directly with LAM.

It is found in the nucleus inner membrane. Anchors the lamina and the heterochromatin to the inner nuclear membrane. This chain is Lamin-B receptor, found in Drosophila melanogaster (Fruit fly).